The primary structure comprises 411 residues: Coiled-coil domain-containing protein 159 (411 aa).

Positions 84-113 (EQAGKSGAWEKEWDSEPQPHEGTPCSSSDV) are disordered. The span at 91–102 (AWEKEWDSEPQP) shows a compositional bias: basic and acidic residues. A coiled-coil region spans residues 269 to 305 (EELELVREEVTFIYQKLQDQEDEISENLLNIQKMQKT). Residues 372-411 (RASSLRGQKGHQCKSSQCPSWDSDSDWERPFSKSGSYPPA) form a disordered region. Residues 384–393 (CKSSQCPSWD) are compositionally biased toward polar residues.

Interacts with DYNLT2. Interacts with GGNBP1. Interacts with OSBP2. In terms of tissue distribution, expressed in spermatids but undetectable in the spermatozoon (at protein level). Highly expressed in the testis (at protein level).

Functionally, functions during spermatid development; may participate in the centrosome reduction procedure of spermatids and is required for the formation of the connecting piece/sperm head-tail coupling apparatus (HTCA) and the correct and tight attachment of the flagellum to the nuclear envelope. The polypeptide is Coiled-coil domain-containing protein 159 (Ccdc159) (Mus musculus (Mouse)).